The sequence spans 548 residues: Transcriptional adapter ADA2a (548 aa).

Positions 1–30 (MGRSKLASRPAEEDLNPGKSKRKKISLGPE) are disordered. A ZZ-type zinc finger spans residues 48 to 104 (PGLYCCNYCDKDLSGLVRFKCAVCMDFDLCVECFSVGVELNRHKNSHPYRVMDNLSF). 8 residues coordinate Zn(2+): Cys53, Cys56, Cys68, Cys71, Cys77, Cys80, His90, and His94. Residues 106-158 (LVTSDWNADEEILLLEAIATYGFGNWKEVADHVGSKTTTECIKHFNSAYMQSP) form the SANT domain. Lys257 is modified (N6-acetyllysine; by GCN5). The stretch at 365-386 (QSKEEHKELIKKVIEEHQILRR) forms a coiled coil. The SWIRM domain occupies 461 to 548 (PRIYSGLDTW…LVHKGIGDST (88 aa)).

Interacts in vitro with the HAT domain of GCN5 and with the DNA-binding domain of the transcriptional activator DREB1B/CBF1. Acetylated in vitro by GCN5, but acetylation is not essential for biological activity. As to expression, expressed in roots and leaves.

It is found in the nucleus. Its function is as follows. Required for the function of some acidic activation domains, which activate transcription from a distant site. The exact mechanism of action is not yet known. ADA2 stimulates the acetyltransferase activity of GCN5 on free histones or nucleosomes, probably by opening up the promoter region. This chain is Transcriptional adapter ADA2a (ADA2A), found in Arabidopsis thaliana (Mouse-ear cress).